Here is a 231-residue protein sequence, read N- to C-terminus: MTKRVALEPAFILHRRPYSNTSLILELLTPNHGRVCALARSARGLKSRYKGKLELFSPLLISWSGRSDLKFLGDVEANGMPYLLEGEALLCGFYLNELLIRLLHHDDPYLRLFHHYQNTLEKLVNGRLEATLRCFEKQLLDELGYGLPLSCDVEMKLPFKPDQFYQYLPDRGFLLCEKSEERDVFSGKSLLALQEESFSDESSLKEIKYLMRLTLNRLLGKKPLKTRELLF.

The protein belongs to the RecO family.

Functionally, involved in DNA repair and RecF pathway recombination. In Coxiella burnetii (strain CbuK_Q154) (Coxiella burnetii (strain Q154)), this protein is DNA repair protein RecO.